The sequence spans 501 residues: Inactive cytidine monophosphate-N-acetylneuraminic acid hydroxylase (501 aa).

Belongs to the CMP-Neu5Ac hydroxylase family. Widely expressed. Highly expressed in thymus. Not expressed in brain. May be expressed in adult stem cells (at protein level).

It localises to the cytoplasm. Sialic acids are components of carbohydrate chains of glycoconjugates and are involved in cell-cell recognition and cell-pathogen interactions. That protein has no CMP-N-acetylneuraminate monooxygenase activity and is not able to convert CMP-N-acetylneuraminic acid (CMP-Neu5Ac) into its hydroxylated derivative CMP-N-glycolylneuraminic acid (CMP-Neu5Gc), a sialic acid abundantly expressed at the surface of many cells in vertebrates. However, it may play a role in Wnt signaling. This is Inactive cytidine monophosphate-N-acetylneuraminic acid hydroxylase (CMAHP) from Homo sapiens (Human).